Here is an 84-residue protein sequence, read N- to C-terminus: Cytochrome c oxidase subunit 12, mitochondrial (84 aa).

The region spanning 27–70 (TKHCWQNYVDYHKCILAKGEDFAPCRQFWLAYRSLCPSGWYQRW) is the CHCH domain. Residues 30–40 (CWQNYVDYHKC) carry the Cx9C motif motif. Intrachain disulfides connect Cys30–Cys62 and Cys40–Cys51. The short motif at 51 to 62 (CRQFWLAYRSLC) is the Cx10C motif element.

Belongs to the cytochrome c oxidase subunit 6B family. Component of the cytochrome c oxidase (complex IV, CIV), a multisubunit enzyme composed of 11 subunits. The complex is composed of a catalytic core of 3 subunits Cox1, Cox2 and Cox3, encoded in the mitochondrial DNA, and 8 supernumerary subunits Cox4, Cox5a/Cox5, Cox6, Cox7, Cox8, Cox7a/Cox9, Cox6b/Cox12 and Cox6a/Cox13, which are encoded in the nuclear genome. The complex exists as a monomer or a dimer and forms respiratory supercomplexes (SCs) in the inner mitochondrial membrane with NADH-ubiquinone oxidoreductase (complex I, CI) and ubiquinol-cytochrome c oxidoreductase (cytochrome b-c1 complex, complex III, CIII), resulting in various different assemblies (supercomplexes I(1)IV(1), I(1)III(3)IV(2), III(2)IV(1) and III(2)IV(2) as well as larger supercomplexes of compositions like I(1)III(2)IV(5-6)).

The protein localises to the mitochondrion inner membrane. It functions in the pathway energy metabolism; oxidative phosphorylation. Component of the cytochrome c oxidase, the last enzyme in the mitochondrial electron transport chain which drives oxidative phosphorylation. The respiratory chain contains 3 multisubunit complexes succinate dehydrogenase (complex II, CII), ubiquinol-cytochrome c oxidoreductase (cytochrome b-c1 complex, complex III, CIII) and cytochrome c oxidase (complex IV, CIV), that cooperate to transfer electrons derived from NADH and succinate to molecular oxygen, creating an electrochemical gradient over the inner membrane that drives transmembrane transport and the ATP synthase. Cytochrome c oxidase is the component of the respiratory chain that catalyzes the reduction of oxygen to water. Electrons originating from reduced cytochrome c in the intermembrane space (IMS) are transferred via the dinuclear copper A center (CU(A)) of Cox2 and heme A of Cox1 to the active site in Cox1, a binuclear center (BNC) formed by heme A3 and copper B (CU(B)). The BNC reduces molecular oxygen to 2 water molecules using 4 electrons from cytochrome c in the IMS and 4 protons from the mitochondrial matrix. The protein is Cytochrome c oxidase subunit 12, mitochondrial (cox-13) of Neurospora crassa (strain ATCC 24698 / 74-OR23-1A / CBS 708.71 / DSM 1257 / FGSC 987).